The primary structure comprises 165 residues: 6,7-dimethyl-8-ribityllumazine synthase (165 aa).

Residues F22, S56–E58, and A80–I82 contribute to the 5-amino-6-(D-ribitylamino)uracil site. A (2S)-2-hydroxy-3-oxobutyl phosphate-binding site is contributed by E85–T86. H88 acts as the Proton donor in catalysis. F113 provides a ligand contact to 5-amino-6-(D-ribitylamino)uracil. Position 127 (R127) interacts with (2S)-2-hydroxy-3-oxobutyl phosphate.

It belongs to the DMRL synthase family.

It catalyses the reaction (2S)-2-hydroxy-3-oxobutyl phosphate + 5-amino-6-(D-ribitylamino)uracil = 6,7-dimethyl-8-(1-D-ribityl)lumazine + phosphate + 2 H2O + H(+). The protein operates within cofactor biosynthesis; riboflavin biosynthesis; riboflavin from 2-hydroxy-3-oxobutyl phosphate and 5-amino-6-(D-ribitylamino)uracil: step 1/2. Catalyzes the formation of 6,7-dimethyl-8-ribityllumazine by condensation of 5-amino-6-(D-ribitylamino)uracil with 3,4-dihydroxy-2-butanone 4-phosphate. This is the penultimate step in the biosynthesis of riboflavin. The protein is 6,7-dimethyl-8-ribityllumazine synthase of Thermotoga sp. (strain RQ2).